The chain runs to 141 residues: Putative antirestriction protein YubI (141 aa).

This sequence belongs to the antirestriction protein family.

The chain is Putative antirestriction protein YubI (yubI) from Escherichia coli (strain K12).